Consider the following 219-residue polypeptide: uncharacterized protein (219 aa).

This sequence belongs to the CIA30 family.

It localises to the cytoplasm. It is found in the nucleus. This is an uncharacterized protein from Schizosaccharomyces pombe (strain 972 / ATCC 24843) (Fission yeast).